The chain runs to 360 residues: Peptide chain release factor 1 (360 aa).

Gln235 bears the N5-methylglutamine mark.

It belongs to the prokaryotic/mitochondrial release factor family. Post-translationally, methylated by PrmC. Methylation increases the termination efficiency of RF1.

Its subcellular location is the cytoplasm. Peptide chain release factor 1 directs the termination of translation in response to the peptide chain termination codons UAG and UAA. The chain is Peptide chain release factor 1 from Paracidovorax citrulli (strain AAC00-1) (Acidovorax citrulli).